Consider the following 130-residue polypeptide: Small ribosomal subunit protein uS8 (130 aa).

The protein belongs to the universal ribosomal protein uS8 family. Part of the 30S ribosomal subunit. Contacts proteins S5 and S12.

Functionally, one of the primary rRNA binding proteins, it binds directly to 16S rRNA central domain where it helps coordinate assembly of the platform of the 30S subunit. The sequence is that of Small ribosomal subunit protein uS8 from Mannheimia succiniciproducens (strain KCTC 0769BP / MBEL55E).